A 494-amino-acid polypeptide reads, in one-letter code: MRIPTYDFGSKFSVVQEVMRLQTVKHFLEPVLEPLIRKVVKEEVELALGKHLAGIKWICEKETHPLESRNLQLKFLNNLSLPVFTSARIEGDEGQAIRVGLIDPSTGQIFSSGPASSAKLEVFVVEGDFNSVSDWTDEDIRNNIVREREGKKPLLNGNVFAVLNDGIGVMDEISFTDNSSWTRSRKFRLGVRIVDQFDYVKIREAITESFVVRDHRGELYKKHHPPSLFDEVWRLEKIGKDGAFHRRLNLSNINTVKDFLTHFHLNSSKLRQVLGTGMSSKMWEITLDHARSCVLDSSVHVYQAPGFQKKTAVVFNVVAQVLGLLVDFQYIPAEKLSEIEKAQAEVMVIDALSHLNEVISYDDEVSMMRNVLNAPASQGSVAGIDYSGLSLTSLDGYGFVSSLHNTAECSGKHSDDVDMEVTPHGLYEDYDNLWNCSHILGLEEPQSELQSALDDFMSQKNASVGGKAHSKRWTKLFSVSRWLSVFKYVKLGKI.

A calmodulin-binding region spans residues 1 to 62; sequence MRIPTYDFGS…AGIKWICEKE (62 aa). Positions 132–252 are DNA-binding; that stretch reads VSDWTDEDIR…AFHRRLNLSN (121 aa).

Belongs to the plant ACBP60 protein family. As to quaternary structure, interacts with calmodulin (CaM). Expressed in stems, flowers and root.

The protein resides in the nucleus. Transcription activator that binds DNA in a sequence-specific manner, likely 5'-GAAATTTTGG-3', to promote the expression of target genes. The protein is Calmodulin-binding protein 60 A of Arabidopsis thaliana (Mouse-ear cress).